The primary structure comprises 162 residues: ATP synthase subunit b 1 (162 aa).

Residues 1-21 (MLLTAEFWVAVAFVAFLVIVW) form a helical membrane-spanning segment.

The protein belongs to the ATPase B chain family. As to quaternary structure, F-type ATPases have 2 components, F(1) - the catalytic core - and F(0) - the membrane proton channel. F(1) has five subunits: alpha(3), beta(3), gamma(1), delta(1), epsilon(1). F(0) has three main subunits: a(1), b(2) and c(10-14). The alpha and beta chains form an alternating ring which encloses part of the gamma chain. F(1) is attached to F(0) by a central stalk formed by the gamma and epsilon chains, while a peripheral stalk is formed by the delta and b chains.

It is found in the cell inner membrane. F(1)F(0) ATP synthase produces ATP from ADP in the presence of a proton or sodium gradient. F-type ATPases consist of two structural domains, F(1) containing the extramembraneous catalytic core and F(0) containing the membrane proton channel, linked together by a central stalk and a peripheral stalk. During catalysis, ATP synthesis in the catalytic domain of F(1) is coupled via a rotary mechanism of the central stalk subunits to proton translocation. In terms of biological role, component of the F(0) channel, it forms part of the peripheral stalk, linking F(1) to F(0). This is ATP synthase subunit b 1 from Methylorubrum extorquens (strain PA1) (Methylobacterium extorquens).